A 126-amino-acid polypeptide reads, in one-letter code: Holo-[acyl-carrier-protein] synthase (126 aa).

Aspartate 9 and glutamate 58 together coordinate Mg(2+).

Belongs to the P-Pant transferase superfamily. AcpS family. Mg(2+) is required as a cofactor.

The protein localises to the cytoplasm. The catalysed reaction is apo-[ACP] + CoA = holo-[ACP] + adenosine 3',5'-bisphosphate + H(+). Functionally, transfers the 4'-phosphopantetheine moiety from coenzyme A to a Ser of acyl-carrier-protein. This chain is Holo-[acyl-carrier-protein] synthase, found in Shewanella frigidimarina (strain NCIMB 400).